The sequence spans 582 residues: MGFNVIRLLRGSAVAVVLAPTVLLTMLSSAERGCPKGCRCEGKMVYCESQKLQEIPSSISAGCLGLSLRYNSLQKLKYNQFKGLNQLTWLYLDHNHISNIDENAFNGIRRLKELILSSNRISYFLNNTFRPVTNLRNLDLSYNQLHSLGSEQFRGLRKLLSLHLRSNSLRTIPVRIFQDCRNLELLDLGYNRIRSLARNVFAGMIRLKELHLEHNQFSKLNLALFPRLVSLQNLYMQWNKISVIGQTMSWTWSSLQRLDLSGNEIEAFSGPSVFQCVPNLQRLNLDSNKLTFIGQEILDSWISLNDISLAGNIWECSRNICSLVNWLRSFKGLRENTIICASPKELQGVNVIDAVKNYSICGKSTTTERFDLARALPKPTFKPKLPRPKHESKPPLPPTVGATEPSPETDVDTEHISFHKIIAGSVALFLSVLVILLVMYVSWKRYPASMKQLQQRSLMRRHRKKKRQSLKQMTPGTQEFYVDYKPTNTETSEMLLNGTGPCTYSKSGSRECEIPLSMNVSTFLAYDQPTISYCGVHHELLSHKSFETNAQEDTMESHLETELDLSTITSAGRISDHKPQLA.

The N-terminal stretch at 1 to 30 is a signal peptide; that stretch reads MGFNVIRLLRGSAVAVVLAPTVLLTMLSSA. The LRRNT domain maps to 31–61; it reads ERGCPKGCRCEGKMVYCESQKLQEIPSSISA. The Extracellular segment spans residues 31-420; it reads ERGCPKGCRC…VDTEHISFHK (390 aa). 10 LRR repeats span residues 63–83, 86–107, 110–131, 134–155, 158–179, 182–203, 206–226, 230–251, 254–275, and 279–300; these read CLGLSLRYNSLQKLKYNQFKG, QLTWLYLDHNHISNIDENAFNG, RLKELILSSNRISYFLNNTFRP, NLRNLDLSYNQLHSLGSEQFRG, KLLSLHLRSNSLRTIPVRIFQD, NLELLDLGYNRIRSLARNVFAG, RLKELHLEHNQFSKLNLALFP, SLQNLYMQWNKISVIGQTMSWT, SLQRLDLSGNEIEAFSGPSVFQ, and NLQRLNLDSNKLTFIGQEILDS. N-linked (GlcNAc...) asparagine glycosylation occurs at N126. Positions 312-363 constitute an LRRCT domain; that stretch reads NIWECSRNICSLVNWLRSFKGLRENTIICASPKELQGVNVIDAVKNYSICGK. N-linked (GlcNAc...) asparagine glycosylation is present at N357. Residues 378–410 are disordered; that stretch reads KPTFKPKLPRPKHESKPPLPPTVGATEPSPETD. A helical transmembrane segment spans residues 421–441; sequence IIAGSVALFLSVLVILLVMYV. At 442 to 582 the chain is on the cytoplasmic side; that stretch reads SWKRYPASMK…RISDHKPQLA (141 aa).

The protein belongs to the LRRTM family. As to expression, expressed in neuronal tissues.

Its subcellular location is the cell membrane. The protein resides in the postsynaptic cell membrane. Functionally, may play a role in the development and maintenance of the vertebrate nervous system. Exhibits a limited synaptogenic activity in vitro, restricted to excitatory presynaptic differentiation. This chain is Leucine-rich repeat transmembrane neuronal protein 3 (Lrrtm3), found in Mus musculus (Mouse).